Consider the following 395-residue polypeptide: Thyroid hormone receptor beta (395 aa).

The modulating stretch occupies residues 1-31 (MSEPAENCSPRWKDEAIQNGYIPSYLDKDEL). Residues Cys-32, Cys-35, Cys-49, Cys-52, Cys-70, Cys-76, Cys-86, and Cys-89 each contribute to the Zn(2+) site. NR C4-type zinc fingers lie at residues 32–52 (CVVC…CEGC) and 70–94 (CKYE…FKKC). The nuclear receptor DNA-binding region spans 32 to 99 (CVVCGDKATG…RFKKCIAVGM (68 aa)). An NR LBD domain is found at 142 to 395 (EEWDLIRMVT…PPLFLEVFED (254 aa)). 3,3',5-triiodo-L-thyronine contacts are provided by Arg-216, Asn-265, and His-369. Residues Arg-216, Asn-265, and His-369 each coordinate L-thyroxine.

This sequence belongs to the nuclear hormone receptor family. NR1 subfamily.

The protein localises to the nucleus. Its function is as follows. Nuclear hormone receptor that can act as a repressor or activator of transcription. High affinity receptor for thyroid hormones, including triiodothyronine and thyroxine. This is Thyroid hormone receptor beta (thrb) from Paralichthys olivaceus (Bastard halibut).